The primary structure comprises 226 residues: Deoxyribose-phosphate aldolase (226 aa).

Catalysis depends on Asp94, which acts as the Proton donor/acceptor. Residue Lys156 is the Schiff-base intermediate with acetaldehyde of the active site. Catalysis depends on Lys185, which acts as the Proton donor/acceptor.

Belongs to the DeoC/FbaB aldolase family. DeoC type 1 subfamily.

The protein localises to the cytoplasm. It carries out the reaction 2-deoxy-D-ribose 5-phosphate = D-glyceraldehyde 3-phosphate + acetaldehyde. It functions in the pathway carbohydrate degradation; 2-deoxy-D-ribose 1-phosphate degradation; D-glyceraldehyde 3-phosphate and acetaldehyde from 2-deoxy-alpha-D-ribose 1-phosphate: step 2/2. Catalyzes a reversible aldol reaction between acetaldehyde and D-glyceraldehyde 3-phosphate to generate 2-deoxy-D-ribose 5-phosphate. The chain is Deoxyribose-phosphate aldolase from Burkholderia lata (strain ATCC 17760 / DSM 23089 / LMG 22485 / NCIMB 9086 / R18194 / 383).